A 329-amino-acid polypeptide reads, in one-letter code: Meiotic drive suppressor wtf21 (329 aa).

Residues M1–D68 are disordered. Basic and acidic residues predominate over residues K19 to P30. The next 5 helical transmembrane spans lie at F73–L95, W110–E132, I165–I182, A192–P214, and G290–A312.

Belongs to the WTF family. As to quaternary structure, homomer. Interacts with other proteins that exhibit high sequence similarity.

The protein localises to the spore membrane. It is found in the vacuole membrane. Acts as a suppressor component of the dual wtf meiotic drive system, and can suppress but not confer meiotic drive by compatible poisons. Wtf meiotic drive systems promote unequal transmission of alleles from the parental zygote to progeny spores by encoding a poison and an antidote from the same locus; the poison is trans-acting and forms toxic aggregates in all spores within an ascus, wherease the antidote is spore-specific and targets aggregates for degradation by the vacuole. Meiotic drive by wtf systems therefore lead to poisoning of all progeny that do not inherit the dual poison/antidote allele, or express a compatible antidote. The sequence is that of Meiotic drive suppressor wtf21 from Schizosaccharomyces pombe (strain 972 / ATCC 24843) (Fission yeast).